The chain runs to 1294 residues: Leucine-rich repeat receptor protein kinase MSP1 (1294 aa).

The signal sequence occupies residues 1–22; sequence MVSNSFWLFILLVSFIPISAWA. LRR repeat units follow at residues 88–112, 113–136, 138–160, 161–184, and 186–207; these read FQSL…LGNL, QNLQ…LYNL, MLKE…IAQL, QHLT…LGSL, and NLEL…TFGN. Residues Asn-198, Asn-207, and Asn-220 are each glycosylated (N-linked (GlcNAc...) asparagine). LRR repeat units follow at residues 232-256, 258-280, 282-304, 305-328, 330-352, 353-376, 378-400, 401-422, 423-446, 447-469, 471-493, 494-517, 519-541, 542-565, 566-589, 591-613, 614-637, 649-673, 675-697, 698-721, 722-745, 746-770, and 772-794; these read LTNL…IGQL, NLEL…IGSL, QLKL…ISGL, SSLT…MGEL, NLTQ…LGNC, KKLT…FADL, AIVS…IQKW, KNAR…VLPL, QHLL…ICQA, NSLH…AFKG, TNLT…YLAE, LPLV…LWES, TLLE…IGKL, SVLQ…VGDL, RNLT…LFNC, KLAT…ISHL, TLLD…ICVG, LQHH…IKNC, MVMV…LGEL, TNLT…SGPL, VQLQ…IGQI, LPKI…LLCN, and YLNH…CPDG. N-linked (GlcNAc...) asparagine glycans are attached at residues Asn-330 and Asn-359. 2 N-linked (GlcNAc...) asparagine glycosylation sites follow: Asn-458 and Asn-472. Residues Asn-567, Asn-570, and Asn-601 are each glycosylated (N-linked (GlcNAc...) asparagine). 3 N-linked (GlcNAc...) asparagine glycosylation sites follow: Asn-687, Asn-699, and Asn-704. 3 N-linked (GlcNAc...) asparagine glycosylation sites follow: Asn-805, Asn-821, and Asn-832. LRR repeat units lie at residues 822–846 and 848–870; these read FTQL…LSDL and SLNY…ICNI. Residues 917–937 traverse the membrane as a helical segment; sequence ITICAFTFVIIIVLVLLAVYL. Positions 1002–1282 constitute a Protein kinase domain; that stretch reads FSKVHIIGDG…KGLKMTHGME (281 aa). ATP-binding positions include 1008 to 1016 and Lys-1030; that span reads IGDGGFGTV. Catalysis depends on Asp-1129, which acts as the Proton acceptor.

This sequence belongs to the protein kinase superfamily. Ser/Thr protein kinase family. In terms of assembly, interacts with TDL1A. In terms of tissue distribution, expressed in anthers and ovules during meiosis.

It localises to the cell membrane. The catalysed reaction is L-seryl-[protein] + ATP = O-phospho-L-seryl-[protein] + ADP + H(+). The enzyme catalyses L-threonyl-[protein] + ATP = O-phospho-L-threonyl-[protein] + ADP + H(+). In terms of biological role, receptor-like kinase that plays important roles in restricting the number of cells entering into male and female sporogenesis. Involved in cell specification during anther development and initiation of anther wall formation. This Oryza sativa subsp. japonica (Rice) protein is Leucine-rich repeat receptor protein kinase MSP1.